Here is an 858-residue protein sequence, read N- to C-terminus: Leucine--tRNA ligase (858 aa).

A 'HIGH' region motif is present at residues 42–52; that stretch reads PYPSGRLHMGH. Residues 618-622 carry the 'KMSKS' region motif; it reads KMSKS. Lysine 621 lines the ATP pocket.

This sequence belongs to the class-I aminoacyl-tRNA synthetase family.

Its subcellular location is the cytoplasm. It carries out the reaction tRNA(Leu) + L-leucine + ATP = L-leucyl-tRNA(Leu) + AMP + diphosphate. The polypeptide is Leucine--tRNA ligase (Aliivibrio salmonicida (strain LFI1238) (Vibrio salmonicida (strain LFI1238))).